A 442-amino-acid chain; its full sequence is MNKTLYQKIYDSHIIHEEKNNTSILYIDLHLLHEVTSPQAFYSLRQKRRMVRQPKKTFATMDHNVSTHNRDINGSGSMAKIQMEQLRKNCDEFNISLYDINNPNQGIVHVIAPEKGMTLPGMTIVCGDSHTSTHGAFGALSFGIGTSEVEHVLATQTLKQQRFKNMKIEIIGQIPKFISAKDIILFIIGKXGSSIGSGYVVEFCGNVIETMSMEERMTICNMAIEMGAKSGLIAPDKTTYAYLKNKIYSPYGVFWEKSLDFWQTLKSDKDAFFDKIFTIDISNLAPQITWGTNPDQVISIDEKIPNYETFSSLTQRNLAKSACKYMGLKKESYLTNISIDKVFIGSXTNARIEDLRLAAKILKNKKISNNVQAIVVPGSGSVKRQAEREGLDKIFINAGFEWRLPGCSMCLGMNRDRLNVGERCASXSNRNFEGRQGRGGRT.

[4Fe-4S] cluster contacts are provided by X347, C407, and C410.

Belongs to the aconitase/IPM isomerase family. LeuC type 1 subfamily. In terms of assembly, heterodimer of LeuC and LeuD. [4Fe-4S] cluster is required as a cofactor.

The catalysed reaction is (2R,3S)-3-isopropylmalate = (2S)-2-isopropylmalate. It functions in the pathway amino-acid biosynthesis; L-leucine biosynthesis; L-leucine from 3-methyl-2-oxobutanoate: step 2/4. Catalyzes the isomerization between 2-isopropylmalate and 3-isopropylmalate, via the formation of 2-isopropylmaleate. In Buchnera aphidicola subsp. Macrosiphoniella ludovicianae, this protein is 3-isopropylmalate dehydratase large subunit.